The primary structure comprises 347 residues: 4-hydroxy-tetrahydrodipicolinate reductase 1, chloroplastic (347 aa).

The transit peptide at 1-51 (MATNGLMASSSVFLHRPRIAFASRTNQTVGKYGKGRVSFMGIGTRRLPVVL) directs the protein to the chloroplast. Position 52 is an N-acetylserine (S52). Residues 79–84 (GCSGKM), 171–173 (GTT), and 194–197 (SPQM) each bind NAD(+). Catalysis depends on H230, which acts as the Proton donor/acceptor. K234 (proton donor) is an active-site residue. 239–240 (GT) contacts (S)-2,3,4,5-tetrahydrodipicolinate.

Belongs to the DapB family.

Its subcellular location is the plastid. It is found in the chloroplast. It carries out the reaction (S)-2,3,4,5-tetrahydrodipicolinate + NAD(+) + H2O = (2S,4S)-4-hydroxy-2,3,4,5-tetrahydrodipicolinate + NADH + H(+). The catalysed reaction is (S)-2,3,4,5-tetrahydrodipicolinate + NADP(+) + H2O = (2S,4S)-4-hydroxy-2,3,4,5-tetrahydrodipicolinate + NADPH + H(+). Its pathway is amino-acid biosynthesis; L-lysine biosynthesis via DAP pathway; (S)-tetrahydrodipicolinate from L-aspartate: step 4/4. Functionally, catalyzes the conversion of 4-hydroxy-tetrahydrodipicolinate (HTPA) to tetrahydrodipicolinate. The protein is 4-hydroxy-tetrahydrodipicolinate reductase 1, chloroplastic (DAPB1) of Arabidopsis thaliana (Mouse-ear cress).